Consider the following 447-residue polypeptide: UPF0210 protein lhv_0606 (447 aa).

The protein belongs to the UPF0210 family. In terms of assembly, homodimer.

The sequence is that of UPF0210 protein lhv_0606 from Lactobacillus helveticus (strain DPC 4571).